Reading from the N-terminus, the 1017-residue chain is Integrator complex subunit 3 (1017 aa).

A disordered region spans residues E952–D1017. Positions N983 to D997 are enriched in acidic residues.

It belongs to the Integrator subunit 3 family. As to quaternary structure, component of the Integrator complex, composed of core subunits INTS1, INTS2, INTS3, INTS4, INTS5, INTS6, INTS7, INTS8, INTS9/RC74, INTS10, INTS11/CPSF3L, INTS12, INTS13, INTS14 and INTS15. The core complex associates with protein phosphatase 2A subunits PPP2CA and PPP2R1A, to form the Integrator-PP2A (INTAC) complex. Component of the SOSS complex.

It localises to the nucleus. The protein localises to the cytoplasm. In terms of biological role, component of the integrator complex, a multiprotein complex that terminates RNA polymerase II (Pol II) transcription in the promoter-proximal region of genes. The integrator complex provides a quality checkpoint during transcription elongation by driving premature transcription termination of transcripts that are unfavorably configured for transcriptional elongation: the complex terminates transcription by (1) catalyzing dephosphorylation of the C-terminal domain (CTD) of Pol II subunit POLR2A/RPB1 and SUPT5H/SPT5, (2) degrading the exiting nascent RNA transcript via endonuclease activity and (3) promoting the release of Pol II from bound DNA. The integrator complex is also involved in terminating the synthesis of non-coding Pol II transcripts, such as enhancer RNAs (eRNAs), small nuclear RNAs (snRNAs), telomerase RNAs and long non-coding RNAs (lncRNAs). Within the integrator complex, INTS3 is involved in the post-termination step: INTS3 binds INTS7 in the open conformation of integrator complex and prevents the rebinding of Pol II to the integrator after termination cycle. Functionally, component of the SOSS complex, a multiprotein complex that functions downstream of the MRN complex to promote DNA repair and G2/M checkpoint. The SOSS complex associates with single-stranded DNA at DNA lesions and influences diverse endpoints in the cellular DNA damage response including cell-cycle checkpoint activation, recombinational repair and maintenance of genomic stability. The SOSS complex is required for efficient homologous recombination-dependent repair of double-strand breaks (DSBs) and ATM-dependent signaling pathways. In the SOSS complex, it is required for the assembly of the complex and for stabilization of the complex at DNA damage sites. This chain is Integrator complex subunit 3 (ints3), found in Danio rerio (Zebrafish).